A 358-amino-acid chain; its full sequence is Alanine racemase (358 aa).

The Proton acceptor; specific for D-alanine role is filled by Lys-35. Lys-35 bears the N6-(pyridoxal phosphate)lysine mark. Arg-130 is a substrate binding site. Tyr-255 functions as the Proton acceptor; specific for L-alanine in the catalytic mechanism. A substrate-binding site is contributed by Met-303.

Belongs to the alanine racemase family. Pyridoxal 5'-phosphate is required as a cofactor.

The enzyme catalyses L-alanine = D-alanine. Its pathway is amino-acid biosynthesis; D-alanine biosynthesis; D-alanine from L-alanine: step 1/1. In terms of biological role, catalyzes the interconversion of L-alanine and D-alanine. May also act on other amino acids. The protein is Alanine racemase (alr) of Shewanella sp. (strain W3-18-1).